Reading from the N-terminus, the 158-residue chain is Putative ribosomal RNA large subunit methyltransferase H (158 aa).

S-adenosyl-L-methionine-binding positions include L76, G107, and 126–131 (LSRMTF).

It belongs to the RNA methyltransferase RlmH family.

It localises to the cytoplasm. It carries out the reaction pseudouridine(1915) in 23S rRNA + S-adenosyl-L-methionine = N(3)-methylpseudouridine(1915) in 23S rRNA + S-adenosyl-L-homocysteine + H(+). Functionally, specifically methylates the pseudouridine at position 1915 (m3Psi1915) in 23S rRNA. The sequence is that of Putative ribosomal RNA large subunit methyltransferase H from Methanocorpusculum labreanum (strain ATCC 43576 / DSM 4855 / Z).